The chain runs to 288 residues: Type II iodothyronine deiodinase (288 aa).

Residues 1 to 5 (MPHVN) are Lumenal-facing. The helical; Signal-anchor for type III membrane protein transmembrane segment at 6–26 (LLVVLLILPGVFSNCLFLALY) threads the bilayer. Topologically, residues 27–288 (DAVSFLRRAL…SFLESVKASR (262 aa)) are cytoplasmic. The interval 99 to 130 (SCAASSSSSHETPTPRTTAEAAATVTTSTTTT) is disordered. U160 is an active-site residue. Residue U160 is a non-standard amino acid, selenocysteine.

It belongs to the iodothyronine deiodinase family. In terms of assembly, predominantly monomer. Can form homodimers but homodimerization is not essential for enzyme activity. Expressed in intestine, liver, kidney and brain of immediately premetamorphic larvae, of larvae in all stages of metamorphosis and of parasitic feeding juveniles. In immediately premetamorphic larvae, levels are significantly higher in intestine and liver than in kidney and brain.

Its subcellular location is the endoplasmic reticulum membrane. The enzyme catalyses 3,3',5-triiodo-L-thyronine + iodide + A + H(+) = L-thyroxine + AH2. The catalysed reaction is 3,3'-diiodo-L-thyronine + iodide + A + H(+) = 3,3',5'-triiodo-L-thyronine + AH2. It carries out the reaction 3'-iodo-L-thyronine + iodide + A + H(+) = 3',5'-diiodo-L-thyronine + AH2. It catalyses the reaction 3,3'-diiodothyronamine + iodide + A + H(+) = 3,3',5'-triiodothyronamine + AH2. The enzyme catalyses 3'-iodothyronamine + iodide + A + H(+) = 3',5'-diiodothyronamine + AH2. Functionally, plays a crucial role in the metabolism of thyroid hormones (TH) and has specific roles in TH activation and inactivation by deiodination. Catalyzes the deiodination of L-thyroxine (T4) to 3,5,3'-triiodothyronine (T3), 3,3',5'-triiodothyronine (rT3) to 3,3'-diiodothyronine (3,3'-T2) and 3',5'-diiodothyronine (3',5'-T2) to 3'-monoiodothyronine (3'-T1) via outer-ring deiodination (ORD). Catalyzes the phenolic ring deiodinations of 3,3',5'-triiodothyronamine and 3',5'- diiodothyronamine. The sequence is that of Type II iodothyronine deiodinase from Petromyzon marinus (Sea lamprey).